Consider the following 231-residue polypeptide: Ribose-5-phosphate isomerase A (231 aa).

Residues 28–31 (TGST), 83–86 (DGAD), and 96–99 (KGGG) each bind substrate. Glutamate 105 serves as the catalytic Proton acceptor. Lysine 123 serves as a coordination point for substrate.

The protein belongs to the ribose 5-phosphate isomerase family. In terms of assembly, homodimer.

It carries out the reaction aldehydo-D-ribose 5-phosphate = D-ribulose 5-phosphate. Its pathway is carbohydrate degradation; pentose phosphate pathway; D-ribose 5-phosphate from D-ribulose 5-phosphate (non-oxidative stage): step 1/1. Its function is as follows. Catalyzes the reversible conversion of ribose-5-phosphate to ribulose 5-phosphate. This Sinorhizobium medicae (strain WSM419) (Ensifer medicae) protein is Ribose-5-phosphate isomerase A.